We begin with the raw amino-acid sequence, 323 residues long: Beta-ketoacyl-[acyl-carrier-protein] synthase III (323 aa).

Residues C114 and H250 contribute to the active site. The ACP-binding stretch occupies residues 251-255 (QANLR). Residue N280 is part of the active site.

Belongs to the thiolase-like superfamily. FabH family. Homodimer.

The protein resides in the cytoplasm. The enzyme catalyses malonyl-[ACP] + acetyl-CoA + H(+) = 3-oxobutanoyl-[ACP] + CO2 + CoA. It participates in lipid metabolism; fatty acid biosynthesis. Functionally, catalyzes the condensation reaction of fatty acid synthesis by the addition to an acyl acceptor of two carbons from malonyl-ACP. Catalyzes the first condensation reaction which initiates fatty acid synthesis and may therefore play a role in governing the total rate of fatty acid production. Possesses both acetoacetyl-ACP synthase and acetyl transacylase activities. Its substrate specificity determines the biosynthesis of branched-chain and/or straight-chain of fatty acids. In Cereibacter sphaeroides (strain ATCC 17023 / DSM 158 / JCM 6121 / CCUG 31486 / LMG 2827 / NBRC 12203 / NCIMB 8253 / ATH 2.4.1.) (Rhodobacter sphaeroides), this protein is Beta-ketoacyl-[acyl-carrier-protein] synthase III.